Consider the following 279-residue polypeptide: MKNKVLLCINTLKSGASILGNDVKVYLETKYFVEVVLIDVGRPLFSFPKENFLFLITLGGDGTVLLAVNLLLENENIDIPIISINMGNVGFLADIKIEDFKKVIDRFFNNSLVINKKFLLHVTVSQHGKDLISKYALNDIIIRSSVLNKMIYVDLMVNSESFLSYKSDGIIVSTPTGSTGYSFSAGGPILEADLEGFXLTPISPHSVYNRSFVFSKLSKLSISFSKEYFIAAASIFLDGINFGSFGVDVVFEFKISSQSLNFVSFCTDTFVKRLKNKLL.

The active-site Proton acceptor is the Asp61. NAD(+) contacts are provided by residues 61–62, 138–139, Lys149, Lys166, Asp168, and 179–184; these read DG, ND, and TGYSFS.

The protein belongs to the NAD kinase family. Requires a divalent metal cation as cofactor.

The protein localises to the cytoplasm. It catalyses the reaction NAD(+) + ATP = ADP + NADP(+) + H(+). Involved in the regulation of the intracellular balance of NAD and NADP, and is a key enzyme in the biosynthesis of NADP. Catalyzes specifically the phosphorylation on 2'-hydroxyl of the adenosine moiety of NAD to yield NADP. The polypeptide is NAD kinase (Borreliella burgdorferi (strain ATCC 35210 / DSM 4680 / CIP 102532 / B31) (Borrelia burgdorferi)).